Reading from the N-terminus, the 163-residue chain is Beta-lactoglobulin-2 (163 aa).

Cystine bridges form between cysteine 66-cysteine 161 and cysteine 106-cysteine 120.

It belongs to the calycin superfamily. Lipocalin family. As to quaternary structure, monomer.

It localises to the secreted. In terms of biological role, lactoglobulin is the primary component of whey, it binds retinol and is probably involved in the transport of that molecule. This chain is Beta-lactoglobulin-2 (LGB2), found in Felis catus (Cat).